Here is a 316-residue protein sequence, read N- to C-terminus: UDP-N-acetylenolpyruvoylglucosamine reductase (316 aa).

Residues 27 to 225 (VGGKAERFYR…KTAINALLKK (199 aa)) form the FAD-binding PCMH-type domain. Arg-190 is a catalytic residue. The Proton donor role is filled by Ser-239. Residue Glu-309 is part of the active site.

This sequence belongs to the MurB family. It depends on FAD as a cofactor.

The protein resides in the cytoplasm. It carries out the reaction UDP-N-acetyl-alpha-D-muramate + NADP(+) = UDP-N-acetyl-3-O-(1-carboxyvinyl)-alpha-D-glucosamine + NADPH + H(+). The protein operates within cell wall biogenesis; peptidoglycan biosynthesis. Functionally, cell wall formation. This chain is UDP-N-acetylenolpyruvoylglucosamine reductase, found in Coxiella burnetii (strain Dugway 5J108-111).